Here is a 517-residue protein sequence, read N- to C-terminus: GMP synthase [glutamine-hydrolyzing] (517 aa).

The 191-residue stretch at 9–199 folds into the Glutamine amidotransferase type-1 domain; the sequence is RILILDFGSQ…VLGVCGCERL (191 aa). The active-site Nucleophile is the Cys86. Residues His173 and Glu175 contribute to the active site. The GMPS ATP-PPase domain occupies 200-392; the sequence is WTSESIIEDA…LGLPYEMLYR (193 aa). 227–233 contributes to the ATP binding site; sequence SGGVDSS.

In terms of assembly, homodimer.

The catalysed reaction is XMP + L-glutamine + ATP + H2O = GMP + L-glutamate + AMP + diphosphate + 2 H(+). Its pathway is purine metabolism; GMP biosynthesis; GMP from XMP (L-Gln route): step 1/1. Its function is as follows. Catalyzes the synthesis of GMP from XMP. This Vibrio vulnificus (strain YJ016) protein is GMP synthase [glutamine-hydrolyzing].